Reading from the N-terminus, the 412-residue chain is Elongation factor 1-gamma 2 (412 aa).

Serine 2 is modified (N-acetylserine). Residues 2–77 enclose the GST N-terminal domain; sequence SQGTLYINRS…YLANQVADEK (76 aa). Residues 86 to 217 enclose the GST C-terminal domain; sequence DVIEKSQILR…AEKALTYTPP (132 aa). The segment at 216-253 is disordered; the sequence is PPKKQKAEKPKAEKSKAEKKKDEAKPADDAAPAKKPKH. The span at 220–247 shows a compositional bias: basic and acidic residues; that stretch reads QKAEKPKAEKSKAEKKKDEAKPADDAAP. Residues 251–412 form the EF-1-gamma C-terminal domain; that stretch reads PKHPLEALGK…KEIVDGKVLK (162 aa).

In terms of assembly, the eukaryotic elongation factor 1 complex (eEF1) is probably a heterohexamer. Two trimeric complexes, each composed of eEF1A (TEF1 or TEF2), eEF1Balpha (EFB1) and eEF1Bgamma (CAM1 or TEF4), are probably dimerized via the eF1Bgamma subunits. The eEF1B subcomplex with the GEF activity is formed of eEF1Balpha and eEF1Bgamma. TEF4 interacts with EFB1.

Its subcellular location is the cytoplasm. It participates in protein biosynthesis; polypeptide chain elongation. In terms of biological role, subunit of the eukaryotic elongation factor 1 complex (eEF1). Probably plays a role in anchoring the complex to other cellular components. The protein is Elongation factor 1-gamma 2 (TEF4) of Saccharomyces cerevisiae (strain ATCC 204508 / S288c) (Baker's yeast).